The primary structure comprises 868 residues: MRQVCCSALPPPLEKARCSSYSYSDSSSSSSSNNSSSSTSSRSSSRSSSRSSRGSTTTTSSSENSGSNSGSIFRPAAPPEPRPQPQPQPRSPAARRAAARSRAAAAGGMRRDPAPGSSMLLFGVSLACYSPSLKSVQDQAYKAPVVVEGKVQGLAPAGGSSSNSTREPPASGRVALVKVLDKWPLRSGGLQREQVISVGSCAPLERNQRYIFFLEPTEQPLVFKTAFAPVDPNGKNIKKEVGKILCTDCATRPKLKKMKSQTGEVGEKQSLKCEAAAGNPQPSYRWFKDGKELNRSRDIRIKYGNGRKNSRLQFNKVKVEDAGEYVCEAENILGKDTVRGRLHVNSVSTTLSSWSGHARKCNETAKSYCVNGGVCYYIEGINQLSCKCPNGFFGQRCLEKLPLRLYMPDPKQKHLGFELKEAEELYQKRVLTITGICVALLVVGIVCVVAYCKTKKQRRQMHHHLRQNMCPAHQNRSLANGPSHPRLDPEEIQMADYISKNVPATDHVIRREAETTFSGSHSCSPSHHCSTATPTSSHRHESHTWSLERSESLTSDSQSGIMLSSVGTSKCNSPACVEARARRAAAYSQEERRRAAMPPYHDSIDSLRDSPHSERYVSALTTPARLSPVDFHYSLATQVPTFEITSPNSAHAVSLPPAAPISYRLAEQQPLLRHPAPPGPGPGPGADMQRSYDSYYYPAAGPGPRRGACALGGSLGSLPASPFRIPEDDEYETTQECAPPPPPRPRTRGASRRTSAGPRRWRRSRLNGLAAQRARAARDSLSLSSGSGCGSASASDDDADDADGALAAESTPFLGLRAAHDALRSDSPPLCPAADSRTYYSLDSHSTRASSRHSRGPPTRAKQDSGPL.

Residues 1–114 (MRQVCCSALP…AAGGMRRDPA (114 aa)) are disordered. A propeptide spanning residues 1-127 (MRQVCCSALP…SMLLFGVSLA (127 aa)) is cleaved from the precursor. A compositionally biased stretch (low complexity) spans 19 to 75 (SSYSYSDSSSSSSSNNSSSSTSSRSSSRSSSRSSRGSTTTTSSSENSGSNSGSIFRP). 2 N-linked (GlcNAc...) asparagine glycosylation sites follow: Asn-33 and Asn-34. Positions 76-90 (AAPPEPRPQPQPQPR) are enriched in pro residues. Positions 91 to 108 (SPAARRAAARSRAAAAGG) are enriched in low complexity. Residues 128–429 (CYSPSLKSVQ…KEAEELYQKR (302 aa)) are Extracellular-facing. N-linked (GlcNAc...) asparagine glycosylation is found at Asn-163, Asn-294, and Asn-362. The Ig-like C2-type domain occupies 253-348 (PKLKKMKSQT…RGRLHVNSVS (96 aa)). 4 cysteine pairs are disulfide-bonded: Cys-273–Cys-327, Cys-361–Cys-375, Cys-369–Cys-386, and Cys-388–Cys-397. Residues 357–398 (HARKCNETAKSYCVNGGVCYYIEGINQLSCKCPNGFFGQRCL) enclose the EGF-like domain. A helical transmembrane segment spans residues 430-450 (VLTITGICVALLVVGIVCVVA). The Cytoplasmic segment spans residues 451–868 (YCKTKKQRRQ…TRAKQDSGPL (418 aa)). Disordered stretches follow at residues 469–488 (MCPAHQNRSLANGPSHPRLD), 516–553 (TFSGSHSCSPSHHCSTATPTSSHRHESHTWSLERSESL), 671–690 (LLRHPAPPGPGPGPGADMQR), 720–806 (ASPF…DGAL), and 823–868 (LRSD…SGPL). Low complexity predominate over residues 518-530 (SGSHSCSPSHHCS). Basic and acidic residues predominate over residues 538–551 (HRHESHTWSLERSE). A compositionally biased stretch (low complexity) spans 766–794 (LNGLAAQRARAARDSLSLSSGSGCGSASA).

The protein belongs to the neuregulin family. As to quaternary structure, interacts with ERBB3 and ERBB4. In terms of processing, proteolytic cleavage close to the plasma membrane on the external face leads to the release of the soluble growth factor form. Post-translationally, extensive glycosylation precedes the proteolytic cleavage. Expressed in most parts of the brain, especially the olfactory bulb and cerebellum where it localizes in granule and Purkinje cells. In the hippocampus, found in the granule cells of the dentate gyrus. In the basal forebrain, found in the cholinergic cells. In the hindbrain, weakly detectable in the motor trigeminal nucleus. Not detected in the hypothalamus. Also found in the liver and in the thymus. Not detected in heart, adrenal gland, or testis.

It is found in the cell membrane. It localises to the secreted. Direct ligand for ERBB3 and ERBB4 tyrosine kinase receptors. Concomitantly recruits ERBB1 and ERBB2 coreceptors, resulting in ligand-stimulated tyrosine phosphorylation and activation of the ERBB receptors. May also promote the heterodimerization with the EGF receptor. This Rattus norvegicus (Rat) protein is Pro-neuregulin-2, membrane-bound isoform (Nrg2).